The following is a 121-amino-acid chain: UPF0231 protein ESA_03214 (121 aa).

Belongs to the UPF0231 family.

The polypeptide is UPF0231 protein ESA_03214 (Cronobacter sakazakii (strain ATCC BAA-894) (Enterobacter sakazakii)).